The following is a 260-amino-acid chain: UPF0246 protein BTH_I1090 (260 aa).

Belongs to the UPF0246 family.

The polypeptide is UPF0246 protein BTH_I1090 (Burkholderia thailandensis (strain ATCC 700388 / DSM 13276 / CCUG 48851 / CIP 106301 / E264)).